Consider the following 338-residue polypeptide: NAC domain-containing protein 46 (338 aa).

The NAC domain occupies 20-171 (LPPGFRFHPT…EWVVCRVFHK (152 aa)). The DNA-binding element occupies 118 to 177 (VGMKKTLVFYTGRAPKGEKTNWVMHEYRLDGKYSYHNLPKTARDEWVVCRVFHKNAPSTT).

As to quaternary structure, interacts with RCD1.

The protein resides in the nucleus. Transcriptional activator that acts as a positive regulator of leaf senescence. Activates NYC1, SGR1, SGR2 and PAO, which are genes involved in chlorophyll catabolic processes. Activates senescence-associated genes, such as RNS1, SAG12 and SAG13. The chain is NAC domain-containing protein 46 from Arabidopsis thaliana (Mouse-ear cress).